The primary structure comprises 193 residues: Orotate phosphoribosyltransferase (193 aa).

Position 114–122 (114–122 (EDVITTGGS)) interacts with 5-phospho-alpha-D-ribose 1-diphosphate. Residues Thr-118 and Arg-146 each coordinate orotate.

This sequence belongs to the purine/pyrimidine phosphoribosyltransferase family. PyrE subfamily. As to quaternary structure, homodimer. It depends on Mg(2+) as a cofactor.

It carries out the reaction orotidine 5'-phosphate + diphosphate = orotate + 5-phospho-alpha-D-ribose 1-diphosphate. The protein operates within pyrimidine metabolism; UMP biosynthesis via de novo pathway; UMP from orotate: step 1/2. Catalyzes the transfer of a ribosyl phosphate group from 5-phosphoribose 1-diphosphate to orotate, leading to the formation of orotidine monophosphate (OMP). This is Orotate phosphoribosyltransferase from Chlorobium phaeobacteroides (strain BS1).